A 457-amino-acid polypeptide reads, in one-letter code: Siroheme synthase (457 aa).

Residues 1–204 (MDHLPIFCQL…ADEKAVNATT (204 aa)) are precorrin-2 dehydrogenase /sirohydrochlorin ferrochelatase. NAD(+) contacts are provided by residues 22-23 (DV) and 43-44 (LT). S128 carries the post-translational modification Phosphoserine. A uroporphyrinogen-III C-methyltransferase region spans residues 216–457 (GEVVLVGAGP…RDKLNWFSNY (242 aa)). P225 provides a ligand contact to S-adenosyl-L-methionine. D248 functions as the Proton acceptor in the catalytic mechanism. K270 functions as the Proton donor in the catalytic mechanism. S-adenosyl-L-methionine is bound by residues 301–303 (GGD), I306, 331–332 (TA), M382, and G411.

This sequence in the N-terminal section; belongs to the precorrin-2 dehydrogenase / sirohydrochlorin ferrochelatase family. The protein in the C-terminal section; belongs to the precorrin methyltransferase family.

It carries out the reaction uroporphyrinogen III + 2 S-adenosyl-L-methionine = precorrin-2 + 2 S-adenosyl-L-homocysteine + H(+). It catalyses the reaction precorrin-2 + NAD(+) = sirohydrochlorin + NADH + 2 H(+). The enzyme catalyses siroheme + 2 H(+) = sirohydrochlorin + Fe(2+). The protein operates within cofactor biosynthesis; adenosylcobalamin biosynthesis; precorrin-2 from uroporphyrinogen III: step 1/1. Its pathway is cofactor biosynthesis; adenosylcobalamin biosynthesis; sirohydrochlorin from precorrin-2: step 1/1. It participates in porphyrin-containing compound metabolism; siroheme biosynthesis; precorrin-2 from uroporphyrinogen III: step 1/1. It functions in the pathway porphyrin-containing compound metabolism; siroheme biosynthesis; siroheme from sirohydrochlorin: step 1/1. The protein operates within porphyrin-containing compound metabolism; siroheme biosynthesis; sirohydrochlorin from precorrin-2: step 1/1. Functionally, multifunctional enzyme that catalyzes the SAM-dependent methylations of uroporphyrinogen III at position C-2 and C-7 to form precorrin-2 via precorrin-1. Then it catalyzes the NAD-dependent ring dehydrogenation of precorrin-2 to yield sirohydrochlorin. Finally, it catalyzes the ferrochelation of sirohydrochlorin to yield siroheme. The protein is Siroheme synthase of Salmonella heidelberg (strain SL476).